Reading from the N-terminus, the 287-residue chain is Inositol diphosphatase siw14 (287 aa).

The Tyrosine-protein phosphatase domain maps to 85–256; it reads NFGVVYPGII…LNDLKRYISD (172 aa). A phosphoserine mark is found at S156 and S159. The active-site Phosphocysteine intermediate is the C189.

Belongs to the protein-tyrosine phosphatase family. Atypical dual-specificity phosphatase Siw14-like subfamily.

The protein resides in the cytoplasm. Its subcellular location is the nucleus. The enzyme catalyses 5-diphospho-1D-myo-inositol 1,2,3,4,6-pentakisphosphate + H2O = 1D-myo-inositol hexakisphosphate + phosphate + H(+). It carries out the reaction 1-diphospho-1D-myo-inositol 2,3,4,5,6-pentakisphosphate + H2O = 1D-myo-inositol hexakisphosphate + phosphate + H(+). The catalysed reaction is 1,5-bis(diphospho)-1D-myo-inositol 2,3,4,6-tetrakisphosphate + H2O = 1-diphospho-1D-myo-inositol 2,3,4,5,6-pentakisphosphate + phosphate + 2 H(+). Its activity is regulated as follows. Activity is inhibited by the reaction product inorganic phosphate and by sulfate (a phosphate mimetic). Not inhibited by magnesium. In terms of biological role, cleaves the beta-phosphate at the 1- and 5-position of soluble inositol pyrophosphates. Has exopolyphosphatase activity in vitro but does not appear to contribute to the homeostasis of cellular polyphosphate. This is Inositol diphosphatase siw14 from Schizosaccharomyces pombe (strain 972 / ATCC 24843) (Fission yeast).